A 379-amino-acid polypeptide reads, in one-letter code: Chaperone protein DnaJ (379 aa).

Positions 6 to 71 (DYYEVLGVDK…QKRSRYDQFG (66 aa)) constitute a J domain. The segment at 138–220 (GVEREINVSK…CNGKGRLRST (83 aa)) adopts a CR-type zinc-finger fold. Residues C151, C154, C168, C171, C194, C197, C208, and C211 each contribute to the Zn(2+) site. 4 CXXCXGXG motif repeats span residues 151-158 (CSKCTGSG), 168-175 (CNHCNGTG), 194-201 (CDACKGEG), and 208-215 (CPACNGKG).

Belongs to the DnaJ family. Homodimer. Requires Zn(2+) as cofactor.

The protein localises to the cytoplasm. Participates actively in the response to hyperosmotic and heat shock by preventing the aggregation of stress-denatured proteins and by disaggregating proteins, also in an autonomous, DnaK-independent fashion. Unfolded proteins bind initially to DnaJ; upon interaction with the DnaJ-bound protein, DnaK hydrolyzes its bound ATP, resulting in the formation of a stable complex. GrpE releases ADP from DnaK; ATP binding to DnaK triggers the release of the substrate protein, thus completing the reaction cycle. Several rounds of ATP-dependent interactions between DnaJ, DnaK and GrpE are required for fully efficient folding. Also involved, together with DnaK and GrpE, in the DNA replication of plasmids through activation of initiation proteins. The chain is Chaperone protein DnaJ from Ruminiclostridium cellulolyticum (strain ATCC 35319 / DSM 5812 / JCM 6584 / H10) (Clostridium cellulolyticum).